A 212-amino-acid chain; its full sequence is Large ribosomal subunit protein uL4 (212 aa).

The segment covering 54 to 65 has biased composition (polar residues); it reads SQKSRSDVSGSN. A disordered region spans residues 54–85; that stretch reads SQKSRSDVSGSNKKPWRQKGTGRARSGSVKSP.

This sequence belongs to the universal ribosomal protein uL4 family. In terms of assembly, part of the 50S ribosomal subunit.

Functionally, one of the primary rRNA binding proteins, this protein initially binds near the 5'-end of the 23S rRNA. It is important during the early stages of 50S assembly. It makes multiple contacts with different domains of the 23S rRNA in the assembled 50S subunit and ribosome. Its function is as follows. Forms part of the polypeptide exit tunnel. The chain is Large ribosomal subunit protein uL4 from Blochmanniella floridana.